Consider the following 402-residue polypeptide: UDP-glucose 6-dehydrogenase (402 aa).

NAD(+) contacts are provided by residues 2-19 (KIAV…GVLL), V11, D29, K34, T83, T118, and E145. Residues 141–145 (EFLRE), K204, N208, 249–253 (YNNPS), and G257 contribute to the substrate site. Residue Y259 coordinates NAD(+). C260 acts as the Nucleophile in catalysis. K263 contributes to the NAD(+) binding site. K320 contributes to the substrate binding site. NAD(+) is bound at residue R327.

It belongs to the UDP-glucose/GDP-mannose dehydrogenase family.

It carries out the reaction UDP-alpha-D-glucose + 2 NAD(+) + H2O = UDP-alpha-D-glucuronate + 2 NADH + 3 H(+). Its pathway is nucleotide-sugar biosynthesis; UDP-alpha-D-glucuronate biosynthesis; UDP-alpha-D-glucuronate from UDP-alpha-D-glucose: step 1/1. Functionally, catalyzes the formation of UDP-glucuronic acid which is required for capsular hyaluronic acid synthesis. This chain is UDP-glucose 6-dehydrogenase (hasB), found in Streptococcus pyogenes serotype M3 (strain ATCC BAA-595 / MGAS315).